The sequence spans 570 residues: Sulfite reductase [NADPH] hemoprotein beta-component (570 aa).

Residues Cys434, Cys440, Cys479, and Cys483 each contribute to the [4Fe-4S] cluster site. Cys483 provides a ligand contact to siroheme.

The protein belongs to the nitrite and sulfite reductase 4Fe-4S domain family. In terms of assembly, alpha(8)-beta(8). The alpha component is a flavoprotein, the beta component is a hemoprotein. It depends on siroheme as a cofactor. [4Fe-4S] cluster serves as cofactor.

It catalyses the reaction hydrogen sulfide + 3 NADP(+) + 3 H2O = sulfite + 3 NADPH + 4 H(+). Its pathway is sulfur metabolism; hydrogen sulfide biosynthesis; hydrogen sulfide from sulfite (NADPH route): step 1/1. Component of the sulfite reductase complex that catalyzes the 6-electron reduction of sulfite to sulfide. This is one of several activities required for the biosynthesis of L-cysteine from sulfate. The polypeptide is Sulfite reductase [NADPH] hemoprotein beta-component (Salmonella heidelberg (strain SL476)).